We begin with the raw amino-acid sequence, 344 residues long: Isopentenyl-diphosphate delta-isomerase (344 aa).

9–10 is a binding site for substrate; sequence RK. FMN is bound by residues 65–67, serine 95, and asparagine 124; that span reads AMT. Residue glutamine 154 participates in substrate binding. Glutamate 155 serves as a coordination point for Mg(2+). Residues lysine 185, threonine 215, 259–261, and 280–281 each bind FMN; these read GVR and SG.

The protein belongs to the IPP isomerase type 2 family. As to quaternary structure, homooctamer. Dimer of tetramers. The cofactor is FMN. NADPH is required as a cofactor. Requires Mg(2+) as cofactor.

The protein localises to the cytoplasm. It carries out the reaction isopentenyl diphosphate = dimethylallyl diphosphate. Its function is as follows. Involved in the biosynthesis of isoprenoids. Catalyzes the 1,3-allylic rearrangement of the homoallylic substrate isopentenyl (IPP) to its allylic isomer, dimethylallyl diphosphate (DMAPP). In Lacticaseibacillus paracasei (strain ATCC 334 / BCRC 17002 / CCUG 31169 / CIP 107868 / KCTC 3260 / NRRL B-441) (Lactobacillus paracasei), this protein is Isopentenyl-diphosphate delta-isomerase.